The following is a 366-amino-acid chain: tRNA/tmRNA (uracil-C(5))-methyltransferase (366 aa).

S-adenosyl-L-methionine is bound by residues Q190, Y218, N223, E239, and D299. C324 (nucleophile) is an active-site residue. Catalysis depends on E358, which acts as the Proton acceptor.

This sequence belongs to the class I-like SAM-binding methyltransferase superfamily. RNA M5U methyltransferase family. TrmA subfamily.

The enzyme catalyses uridine(54) in tRNA + S-adenosyl-L-methionine = 5-methyluridine(54) in tRNA + S-adenosyl-L-homocysteine + H(+). It catalyses the reaction uridine(341) in tmRNA + S-adenosyl-L-methionine = 5-methyluridine(341) in tmRNA + S-adenosyl-L-homocysteine + H(+). Dual-specificity methyltransferase that catalyzes the formation of 5-methyluridine at position 54 (m5U54) in all tRNAs, and that of position 341 (m5U341) in tmRNA (transfer-mRNA). This Escherichia fergusonii (strain ATCC 35469 / DSM 13698 / CCUG 18766 / IAM 14443 / JCM 21226 / LMG 7866 / NBRC 102419 / NCTC 12128 / CDC 0568-73) protein is tRNA/tmRNA (uracil-C(5))-methyltransferase.